The primary structure comprises 520 residues: RNA polymerase sigma factor sigA (520 aa).

Residues 1–66 (MTATPAVIGL…APATPKLTAV (66 aa)) constitute a chloroplast transit peptide. Gly residues predominate over residues 37-49 (GGGGGGGGGGGGD). Disordered regions lie at residues 37 to 57 (GGGG…APPA), 87 to 117 (HHSS…AHAH), and 171 to 190 (SVSA…TKNG). The segment covering 96-108 (APPPPPPPPPTPS) has biased composition (pro residues). The span at 175 to 187 (RQRRMSGRRRGRT) shows a compositional bias: basic residues. Residues 305–318 (DLIQGGLIGLLRGI) carry the Polymerase core binding motif. Positions 479–498 (WEDISRQFGLSRERVRQVGL) form a DNA-binding region, H-T-H motif.

The protein belongs to the sigma-70 factor family. Expressed in shoots. Expressed in the tips of fully elongated leaves. Expressed in leaf blades.

It localises to the plastid. The protein resides in the chloroplast. In terms of biological role, sigma factors are initiation factors that promote the attachment of plastid-encoded RNA polymerase (PEP) to specific initiation sites and are then released. Controls the transcription of the psaA and psaB genes in chloroplast, and thus maintains the abundance of the core protein complex PsaA-PsaB of photosystem I (PSI) in the thylakoid membrane. Maintains PSI activity, sufficient rate of electron transfer from PSII to PSI, and photochemical efficiency. This is RNA polymerase sigma factor sigA from Oryza sativa subsp. japonica (Rice).